The primary structure comprises 299 residues: Protease HtpX homolog (299 aa).

Transmembrane regions (helical) follow at residues 15–35 (ILLL…GYLF) and 39–59 (GLGG…SMIF). His143 is a Zn(2+) binding site. Glu144 is a catalytic residue. His147 is a binding site for Zn(2+). A run of 2 helical transmembrane segments spans residues 158–178 (IAVA…RMMW) and 198–218 (IIML…ATLV). Glu227 contributes to the Zn(2+) binding site.

Belongs to the peptidase M48B family. Zn(2+) is required as a cofactor.

The protein resides in the cell membrane. The sequence is that of Protease HtpX homolog from Streptococcus pneumoniae (strain P1031).